A 310-amino-acid polypeptide reads, in one-letter code: MFQHETVLLKETVDGLNVKEDGTYVDCTLGGAGHSSYLLSQLSEKGTLIGFDQDDAALDHAREKLAGSKANILFIKSNFRYLKERLNEQGITSVDGVIFDLGVSSPQLDTPERGFSYHHDAPLDMRMDQSAALSAKKVVNEWPFEDLVRIFYKYGEEKFSKQIARKIEEARKKAPIETTGELVDIIKEGIPAPARRTGGHPAKRVFQAIRIAVNDELKVFEEALEQAIELLNPKGRISVITFHSLEDRICKSTFREMSSLPELPHGLPVIPEGLEPKLKLITRKPIVASEQELEHNNRARSAKLRIAEKK.

S-adenosyl-L-methionine contacts are provided by residues alanine 32–histidine 34, aspartate 52, phenylalanine 79, aspartate 100, and glutamine 107.

The protein belongs to the methyltransferase superfamily. RsmH family.

It localises to the cytoplasm. The enzyme catalyses cytidine(1402) in 16S rRNA + S-adenosyl-L-methionine = N(4)-methylcytidine(1402) in 16S rRNA + S-adenosyl-L-homocysteine + H(+). Functionally, specifically methylates the N4 position of cytidine in position 1402 (C1402) of 16S rRNA. The polypeptide is Ribosomal RNA small subunit methyltransferase H (Bacillus pumilus (strain SAFR-032)).